The primary structure comprises 283 residues: UPF0276 protein Nmul_A2550 (283 aa).

Belongs to the UPF0276 family.

This chain is UPF0276 protein Nmul_A2550, found in Nitrosospira multiformis (strain ATCC 25196 / NCIMB 11849 / C 71).